Here is a 582-residue protein sequence, read N- to C-terminus: 5-aminolevulinate synthase, erythroid-specific, mitochondrial (582 aa).

A succinyl-CoA-binding site is contributed by arginine 158. Residues cysteine 253 and phenylalanine 254 each contribute to the pyridoxal 5'-phosphate site. Succinyl-CoA is bound by residues serine 275 and arginine 294. 3 residues coordinate pyridoxal 5'-phosphate: serine 327, histidine 355, and threonine 383. Lysine 386 is a catalytic residue. An N6-(pyridoxal phosphate)lysine modification is found at lysine 386. Pyridoxal 5'-phosphate is bound by residues threonine 415 and threonine 416. Residue threonine 503 participates in succinyl-CoA binding.

It belongs to the class-II pyridoxal-phosphate-dependent aminotransferase family. Homodimer. Pyridoxal 5'-phosphate serves as cofactor.

It is found in the mitochondrion inner membrane. The enzyme catalyses succinyl-CoA + glycine + H(+) = 5-aminolevulinate + CO2 + CoA. Its pathway is porphyrin-containing compound metabolism; protoporphyrin-IX biosynthesis; 5-aminolevulinate from glycine: step 1/1. Catalyzes the pyridoxal 5'-phosphate (PLP)-dependent condensation of succinyl-CoA and glycine to form aminolevulinic acid (ALA), with CoA and CO2 as by-products. Contributes significantly to heme formation during erythropoiesis. This is 5-aminolevulinate synthase, erythroid-specific, mitochondrial (alas2) from Opsanus tau (Oyster toadfish).